The sequence spans 229 residues: MLVCIPEILSKHEVTEFRRLMDQADWEDGRSTAGAQSAMVKRNEQLPPDSELARMLGRRIVSALTANPKFVSAAVPLQIFPPLFNRYAASGNHHFGIHVDNAVRGDPLTGLRIRTDLSVTLFLAEPDEYDGGELVVEDTYGSHEVKLPAGDCVLYPSSSLHMVTPVTRGARVASFFWLQSMIRDAHARSMIYDLDGAIQALVERLGRDDPETVKLTGIYHNLIRYWADV.

Residues 78–180 (QIFPPLFNRY…RVASFFWLQS (103 aa)) form the Fe2OG dioxygenase domain. Residues His98, Asp100, and His161 each coordinate Fe cation. Arg171 is a 2-oxoglutarate binding site.

Fe(2+) serves as cofactor. Requires L-ascorbate as cofactor.

This Rhodopseudomonas palustris (strain BisB5) protein is PKHD-type hydroxylase RPD_3334.